The following is a 201-amino-acid chain: Lipoprotein signal peptidase (201 aa).

3 consecutive transmembrane segments (helical) span residues 33–53 (LLLS…VLAV), 86–106 (GYTW…FWMG), and 110–130 (VSSW…GNLV). Catalysis depends on residues Asp-146 and Asp-160. The chain crosses the membrane as a helical span at residues 158–178 (VADPSVVVGAILLVVLSIFGF).

It belongs to the peptidase A8 family.

Its subcellular location is the cell membrane. The catalysed reaction is Release of signal peptides from bacterial membrane prolipoproteins. Hydrolyzes -Xaa-Yaa-Zaa-|-(S,diacylglyceryl)Cys-, in which Xaa is hydrophobic (preferably Leu), and Yaa (Ala or Ser) and Zaa (Gly or Ala) have small, neutral side chains.. It participates in protein modification; lipoprotein biosynthesis (signal peptide cleavage). In terms of biological role, this protein specifically catalyzes the removal of signal peptides from prolipoproteins. The chain is Lipoprotein signal peptidase from Mycobacterium leprae (strain Br4923).